The chain runs to 715 residues: Fatty acid oxidation complex subunit alpha (715 aa).

The segment at 1–190 (MIYEGKAITV…KVGAVDAVVA (190 aa)) is enoyl-CoA hydratase/isomerase. Asp-297 is a binding site for substrate. The tract at residues 312 to 715 (KDVKQAAVLG…MAKNGQSFFG (404 aa)) is 3-hydroxyacyl-CoA dehydrogenase. NAD(+)-binding positions include Met-325, Asp-344, 401-403 (VVE), Lys-408, and Ser-430. His-451 functions as the For 3-hydroxyacyl-CoA dehydrogenase activity in the catalytic mechanism. An NAD(+)-binding site is contributed by Asn-454. Asn-501 and Tyr-660 together coordinate substrate.

In the N-terminal section; belongs to the enoyl-CoA hydratase/isomerase family. It in the C-terminal section; belongs to the 3-hydroxyacyl-CoA dehydrogenase family. As to quaternary structure, heterotetramer of two alpha chains (FadB) and two beta chains (FadA).

The enzyme catalyses a (3S)-3-hydroxyacyl-CoA + NAD(+) = a 3-oxoacyl-CoA + NADH + H(+). The catalysed reaction is a (3S)-3-hydroxyacyl-CoA = a (2E)-enoyl-CoA + H2O. It carries out the reaction a 4-saturated-(3S)-3-hydroxyacyl-CoA = a (3E)-enoyl-CoA + H2O. It catalyses the reaction (3S)-3-hydroxybutanoyl-CoA = (3R)-3-hydroxybutanoyl-CoA. The enzyme catalyses a (3Z)-enoyl-CoA = a 4-saturated (2E)-enoyl-CoA. The catalysed reaction is a (3E)-enoyl-CoA = a 4-saturated (2E)-enoyl-CoA. Its pathway is lipid metabolism; fatty acid beta-oxidation. Functionally, involved in the aerobic and anaerobic degradation of long-chain fatty acids via beta-oxidation cycle. Catalyzes the formation of 3-oxoacyl-CoA from enoyl-CoA via L-3-hydroxyacyl-CoA. It can also use D-3-hydroxyacyl-CoA and cis-3-enoyl-CoA as substrate. The sequence is that of Fatty acid oxidation complex subunit alpha from Pseudomonas fluorescens (strain Pf0-1).